A 210-amino-acid polypeptide reads, in one-letter code: MTGLFVTLEGPEGAGKSTNRDYLAERLRERGIEVQLTREPGGTPLAERIRELLLAPSDEPMAADTELLLMFAARAQHLAGVIRPALARGAVVLCDRFTDATYAYQGGGRGLPEARIAALESFVQGDLRPDLTLVFDLPVEIGLARAAARGRLDRFEQEDRRFFEAVRQTYLQRAAQAPERYQVLDAGLPLAEVQAGLDRLLPNLLERLNG.

An ATP-binding site is contributed by 10–17 (GPEGAGKS).

The protein belongs to the thymidylate kinase family.

It carries out the reaction dTMP + ATP = dTDP + ADP. In terms of biological role, phosphorylation of dTMP to form dTDP in both de novo and salvage pathways of dTTP synthesis. In Pseudomonas aeruginosa (strain LESB58), this protein is Thymidylate kinase.